Consider the following 191-residue polypeptide: Casparian strip membrane protein 4 (191 aa).

Residues 1–27 (MKTGSVEAGEQASEDATPRRGKKLNRG) lie on the Cytoplasmic side of the membrane. Residues 28-48 (ILILDLVLRVFGAICTLGSAV) form a helical membrane-spanning segment. At 49 to 72 (AMGTTSQTLPSSSQFFRFRAKYND) the chain is on the extracellular side. Residues 73–93 (LPMFMFFAIANSIVCAYLVLS) traverse the membrane as a helical segment. Residues 94 to 110 (LRLSIFHIIRSAGIITR) lie on the Cytoplasmic side of the membrane. Residues 111 to 131 (IILVTFDMVMLVLLTCGASAA) form a helical membrane-spanning segment. Residues 132 to 160 (TSIVYLAHKGNASANWLPFCVRFSHFCNR) are Extracellular-facing. N-linked (GlcNAc...) asparagine glycosylation occurs at Asn142. A helical transmembrane segment spans residues 161–181 (ISGSLIGSFFSIIIFMLLVIL). Topologically, residues 182–191 (SAVSQFSICN) are cytoplasmic.

It belongs to the Casparian strip membrane proteins (CASP) family. In terms of assembly, homodimer and heterodimers.

It is found in the cell membrane. In terms of biological role, regulates membrane-cell wall junctions and localized cell wall deposition. Required for establishment of the Casparian strip membrane domain (CSD) and the subsequent formation of Casparian strips, a cell wall modification of the root endodermis that determines an apoplastic barrier between the intraorganismal apoplasm and the extraorganismal apoplasm and prevents lateral diffusion. This chain is Casparian strip membrane protein 4, found in Ricinus communis (Castor bean).